Reading from the N-terminus, the 298-residue chain is 4-hydroxy-tetrahydrodipicolinate synthase (298 aa).

A pyruvate-binding site is contributed by threonine 48. The active-site Proton donor/acceptor is the tyrosine 137. Lysine 166 functions as the Schiff-base intermediate with substrate in the catalytic mechanism. Isoleucine 207 provides a ligand contact to pyruvate.

Belongs to the DapA family. In terms of assembly, homotetramer; dimer of dimers.

It localises to the cytoplasm. The catalysed reaction is L-aspartate 4-semialdehyde + pyruvate = (2S,4S)-4-hydroxy-2,3,4,5-tetrahydrodipicolinate + H2O + H(+). It participates in amino-acid biosynthesis; L-lysine biosynthesis via DAP pathway; (S)-tetrahydrodipicolinate from L-aspartate: step 3/4. Functionally, catalyzes the condensation of (S)-aspartate-beta-semialdehyde [(S)-ASA] and pyruvate to 4-hydroxy-tetrahydrodipicolinate (HTPA). The protein is 4-hydroxy-tetrahydrodipicolinate synthase of Campylobacter hominis (strain ATCC BAA-381 / DSM 21671 / CCUG 45161 / LMG 19568 / NCTC 13146 / CH001A).